The primary structure comprises 528 residues: Tyrosine 3-monooxygenase (528 aa).

Residue S19 is modified to Phosphoserine; by CaMK2. Residues 33-65 are disordered; sequence GQGAPGPSLTGSPWPGTAAPAASYTPTPRSPRF. Over residues 47 to 59 the composition is skewed to low complexity; that stretch reads PGTAAPAASYTPT. A Phosphoserine modification is found at S62. S71 carries the phosphoserine; by CaMK2 and PKA modification. Fe cation is bound by residues H361, H366, and E406. S502 bears the Phosphoserine mark.

This sequence belongs to the biopterin-dependent aromatic amino acid hydroxylase family. Homotetramer. Interacts (when phosphorylated at Ser-19) with YWHAG; one YWHAG dimer binds to one TH tetramer and this interaction may influence the phosphorylation and dephosphorylation of other sites. Interacts with NT5DC2; the interaction results in reduced phosphorylation and decreased catalytic activity of TH. Fe(2+) serves as cofactor. In terms of processing, phosphorylated on Ser-19, Ser-62 and Ser-71 by several protein kinases with different site specificities. Phosphorylation at Ser-62 and Ser-71 leads to an increase of TH activity. Phosphorylation at Ser-71 activates the enzyme and also counteracts the feedback inhibition of TH by catecholamines. Phosphorylation of Ser-19 and Ser-62 triggers the proteasomal degradation of TH through the ubiquitin-proteasome pathway. Phosphorylation at Ser-62 facilitates transport of TH from the soma to the nerve terminals via the microtubule network. Phosphorylation at Ser-19 induces the high-affinity binding to the 14-3-3 protein YWHAG; this interaction may influence the phosphorylation and dephosphorylation of other sites. Ser-19 increases the phosphorylation at Ser-71 in a hierarchical manner, leading to increased activity. As to expression, mainly expressed in the brain and adrenal glands.

The protein resides in the cytoplasm. It is found in the perinuclear region. Its subcellular location is the nucleus. The protein localises to the cell projection. It localises to the axon. The protein resides in the cytoplasmic vesicle. It is found in the secretory vesicle. Its subcellular location is the synaptic vesicle. The catalysed reaction is (6R)-L-erythro-5,6,7,8-tetrahydrobiopterin + L-tyrosine + O2 = (4aS,6R)-4a-hydroxy-L-erythro-5,6,7,8-tetrahydrobiopterin + L-dopa. It functions in the pathway catecholamine biosynthesis; dopamine biosynthesis; dopamine from L-tyrosine: step 1/2. Inhibited in feedback fashion by the catecholamine neurotransmitters, especially by dopamine in competition with tetrahydrobiopterin. Phosphorylation of several Ser/Thr residues in the N-terminus regulates the catalytic activity. Ser-62 and Ser-71 are readily phosphorylated to activate the catalytic activity. A Cysteine modification induced by N-ethylmaleimide (NEM), inhibits tyrosine 3-monooxygenase activity through the modification of the Cys-207. Its function is as follows. Catalyzes the conversion of L-tyrosine to L-dihydroxyphenylalanine (L-Dopa), the rate-limiting step in the biosynthesis of catecholamines, dopamine, noradrenaline, and adrenaline. Uses tetrahydrobiopterin and molecular oxygen to convert tyrosine to L-Dopa. In addition to tyrosine, is able to catalyze the hydroxylation of phenylalanine and tryptophan with lower specificity. Positively regulates the regression of retinal hyaloid vessels during postnatal development. Functionally, lacks catalytic activity. This chain is Tyrosine 3-monooxygenase, found in Homo sapiens (Human).